The chain runs to 353 residues: Photosystem II protein D1 (353 aa).

Threonine 2 carries the post-translational modification N-acetylthreonine. A Phosphothreonine modification is found at threonine 2. The next 3 membrane-spanning stretches (helical) occupy residues 29–46 (YIGW…TATS), 118–133 (HFLL…EWEL), and 142–156 (WIAV…AATA). Chlorophyll a is bound at residue histidine 118. Pheophytin a is bound at residue tyrosine 126. Positions 170 and 189 each coordinate [CaMn4O5] cluster. The chain crosses the membrane as a helical span at residues 197–218 (FHMLGVAGVFGGSLFSAMHGSL). A chlorophyll a-binding site is contributed by histidine 198. A quinone contacts are provided by residues histidine 215 and 264–265 (SF). Histidine 215 serves as a coordination point for Fe cation. Histidine 272 contacts Fe cation. A helical membrane pass occupies residues 274–288 (FLAAWPVIGIWFTAL). Histidine 332, glutamate 333, aspartate 342, and alanine 344 together coordinate [CaMn4O5] cluster. Residues 345–353 (AVEAPSTNG) constitute a propeptide that is removed on maturation.

It belongs to the reaction center PufL/M/PsbA/D family. As to quaternary structure, PSII is composed of 1 copy each of membrane proteins PsbA, PsbB, PsbC, PsbD, PsbE, PsbF, PsbH, PsbI, PsbJ, PsbK, PsbL, PsbM, PsbT, PsbX, PsbY, PsbZ, Psb30/Ycf12, at least 3 peripheral proteins of the oxygen-evolving complex and a large number of cofactors. It forms dimeric complexes. Requires The D1/D2 heterodimer binds P680, chlorophylls that are the primary electron donor of PSII, and subsequent electron acceptors. It shares a non-heme iron and each subunit binds pheophytin, quinone, additional chlorophylls, carotenoids and lipids. D1 provides most of the ligands for the Mn4-Ca-O5 cluster of the oxygen-evolving complex (OEC). There is also a Cl(-1) ion associated with D1 and D2, which is required for oxygen evolution. The PSII complex binds additional chlorophylls, carotenoids and specific lipids. as cofactor. Tyr-161 forms a radical intermediate that is referred to as redox-active TyrZ, YZ or Y-Z. Post-translationally, C-terminally processed by CTPA; processing is essential to allow assembly of the oxygen-evolving complex and thus photosynthetic growth.

The protein localises to the plastid. It is found in the chloroplast thylakoid membrane. The enzyme catalyses 2 a plastoquinone + 4 hnu + 2 H2O = 2 a plastoquinol + O2. Photosystem II (PSII) is a light-driven water:plastoquinone oxidoreductase that uses light energy to abstract electrons from H(2)O, generating O(2) and a proton gradient subsequently used for ATP formation. It consists of a core antenna complex that captures photons, and an electron transfer chain that converts photonic excitation into a charge separation. The D1/D2 (PsbA/PsbD) reaction center heterodimer binds P680, the primary electron donor of PSII as well as several subsequent electron acceptors. This chain is Photosystem II protein D1, found in Buxus microphylla (Littleleaf boxwood).